We begin with the raw amino-acid sequence, 245 residues long: Biosynthetic peptidoglycan transglycosylase (245 aa).

Residues 19-39 (IVYAGAVFAAAWLATQLFYFV) traverse the membrane as a helical segment.

This sequence belongs to the glycosyltransferase 51 family.

It localises to the cell inner membrane. The enzyme catalyses [GlcNAc-(1-&gt;4)-Mur2Ac(oyl-L-Ala-gamma-D-Glu-L-Lys-D-Ala-D-Ala)](n)-di-trans,octa-cis-undecaprenyl diphosphate + beta-D-GlcNAc-(1-&gt;4)-Mur2Ac(oyl-L-Ala-gamma-D-Glu-L-Lys-D-Ala-D-Ala)-di-trans,octa-cis-undecaprenyl diphosphate = [GlcNAc-(1-&gt;4)-Mur2Ac(oyl-L-Ala-gamma-D-Glu-L-Lys-D-Ala-D-Ala)](n+1)-di-trans,octa-cis-undecaprenyl diphosphate + di-trans,octa-cis-undecaprenyl diphosphate + H(+). It participates in cell wall biogenesis; peptidoglycan biosynthesis. Peptidoglycan polymerase that catalyzes glycan chain elongation from lipid-linked precursors. The polypeptide is Biosynthetic peptidoglycan transglycosylase (Burkholderia multivorans (strain ATCC 17616 / 249)).